We begin with the raw amino-acid sequence, 241 residues long: Octanoyltransferase (241 aa).

The 190-residue stretch at 38–227 (AGGPDTLLLL…AVCNALDGAL (190 aa)) folds into the BPL/LPL catalytic domain. Residues 85 to 92 (RGGKITWH), 157 to 159 (AIG), and 170 to 172 (GFA) contribute to the substrate site. Residue Cys-188 is the Acyl-thioester intermediate of the active site.

This sequence belongs to the LipB family.

It is found in the cytoplasm. It carries out the reaction octanoyl-[ACP] + L-lysyl-[protein] = N(6)-octanoyl-L-lysyl-[protein] + holo-[ACP] + H(+). Its pathway is protein modification; protein lipoylation via endogenous pathway; protein N(6)-(lipoyl)lysine from octanoyl-[acyl-carrier-protein]: step 1/2. Functionally, catalyzes the transfer of endogenously produced octanoic acid from octanoyl-acyl-carrier-protein onto the lipoyl domains of lipoate-dependent enzymes. Lipoyl-ACP can also act as a substrate although octanoyl-ACP is likely to be the physiological substrate. This chain is Octanoyltransferase, found in Mycobacterium marinum (strain ATCC BAA-535 / M).